The following is a 306-amino-acid chain: MASRPKRRAVSRVPPALGDEEEEDEVEEQDEDDSDEEEDEEDEVVNEEVNIEFEAYSISDNDYDGIKKLLQQLFLKAPVNTAELTNLLIQQNHIGSVIKQTDVSEDSDDEVDEDEIFGFISLLNLTERKGTPCAEQIKELILRLCEKNCEKSMVEQLDRLFNDTARPVGFLLSERFINVPPQIALPMHQQLQKELAEAHRANKPCGKCYFYLLISKTFVEAGKSNSKKKRSNQKKDELMFANAEEEFFYEKAILKFNYSVQEESDTCLGGRWSFDDVPMKPLRTVMLIPGDKMSEIMEKLKEHLSV.

A compositionally biased stretch (basic residues) spans 1–10 (MASRPKRRAV). The interval 1–45 (MASRPKRRAVSRVPPALGDEEEEDEVEEQDEDDSDEEEDEEDEVV) is disordered. The segment covering 18–45 (GDEEEEDEVEEQDEDDSDEEEDEEDEVV) has biased composition (acidic residues). S34 and S104 each carry phosphoserine. The interval 51–159 (IEFEAYSISD…EKSMVEQLDR (109 aa)) is interaction with BRCA2. The interval 153–251 (MVEQLDRLFN…NAEEEFFYEK (99 aa)) is interaction with CDKN1A. At S273 the chain carries Phosphoserine.

It belongs to the BCP1 family. Interacts with BRCA2, CDKN1A and MTDH/LYRIC. Interacts with DCTN1/p150-glued and ACTR1A/ARP1. Interacts with alpha-, beta- and gamma-tubulins. Interacts with TENT5C; the interaction has no effect on TENT5C poly(A) polymerase function.

The protein resides in the nucleus. The protein localises to the cytoplasm. It localises to the cytoskeleton. It is found in the microtubule organizing center. Its subcellular location is the centrosome. The protein resides in the centriole. The protein localises to the spindle pole. Functionally, during interphase, required for microtubule organizing and anchoring activities. During mitosis, required for the organization and stabilization of the spindle pole. May promote cell cycle arrest by enhancing the inhibition of CDK2 activity by CDKN1A. May be required for repair of DNA damage by homologous recombination in conjunction with BRCA2. May not be involved in non-homologous end joining (NHEJ). The chain is BRCA2 and CDKN1A-interacting protein (BCCIP) from Bos taurus (Bovine).